We begin with the raw amino-acid sequence, 262 residues long: 5'-nucleotidase SurE (262 aa).

Asp-9, Asp-10, Ser-40, and Asn-95 together coordinate a divalent metal cation.

It belongs to the SurE nucleotidase family. Requires a divalent metal cation as cofactor.

The protein resides in the cytoplasm. It carries out the reaction a ribonucleoside 5'-phosphate + H2O = a ribonucleoside + phosphate. Its function is as follows. Nucleotidase that shows phosphatase activity on nucleoside 5'-monophosphates. This Aliarcobacter butzleri (strain RM4018) (Arcobacter butzleri) protein is 5'-nucleotidase SurE.